The chain runs to 399 residues: Methylthioribose kinase (399 aa).

ATP-binding positions include N40, K57, and E111–L113. D229 contributes to the substrate binding site. ATP is bound at residue D246–E248. Substrate is bound at residue R344.

Belongs to the methylthioribose kinase family. As to quaternary structure, homodimer.

The enzyme catalyses 5-(methylsulfanyl)-D-ribose + ATP = 5-(methylsulfanyl)-alpha-D-ribose 1-phosphate + ADP + H(+). Its pathway is amino-acid biosynthesis; L-methionine biosynthesis via salvage pathway; S-methyl-5-thio-alpha-D-ribose 1-phosphate from S-methyl-5'-thioadenosine (hydrolase route): step 2/2. In terms of biological role, catalyzes the phosphorylation of methylthioribose into methylthioribose-1-phosphate. In Citrobacter koseri (strain ATCC BAA-895 / CDC 4225-83 / SGSC4696), this protein is Methylthioribose kinase.